A 404-amino-acid polypeptide reads, in one-letter code: Cysteine desulfurase IscS (404 aa).

Pyridoxal 5'-phosphate is bound by residues 75–76, Asn155, Gln183, and 203–205; these read AT and SGH. Lys206 bears the N6-(pyridoxal phosphate)lysine mark. Thr243 contributes to the pyridoxal 5'-phosphate binding site. Cys328 acts as the Cysteine persulfide intermediate in catalysis. Cys328 is a [2Fe-2S] cluster binding site.

The protein belongs to the class-V pyridoxal-phosphate-dependent aminotransferase family. NifS/IscS subfamily. Homodimer. Forms a heterotetramer with IscU, interacts with other sulfur acceptors. It depends on pyridoxal 5'-phosphate as a cofactor.

The protein localises to the cytoplasm. The enzyme catalyses (sulfur carrier)-H + L-cysteine = (sulfur carrier)-SH + L-alanine. Its pathway is cofactor biosynthesis; iron-sulfur cluster biosynthesis. Master enzyme that delivers sulfur to a number of partners involved in Fe-S cluster assembly, tRNA modification or cofactor biosynthesis. Catalyzes the removal of elemental sulfur atoms from cysteine to produce alanine. Functions as a sulfur delivery protein for Fe-S cluster synthesis onto IscU, an Fe-S scaffold assembly protein, as well as other S acceptor proteins. The sequence is that of Cysteine desulfurase IscS from Shewanella amazonensis (strain ATCC BAA-1098 / SB2B).